Consider the following 441-residue polypeptide: Growth/differentiation factor 9 (441 aa).

A signal peptide spans 1–29 (MALPSNFLLGVCCFAWLCFLSSLSSQAST). The propeptide occupies 30–306 (EESQSGASEN…EVERSPRRRR (277 aa)). N-linked (GlcNAc...) asparagine glycans are attached at residues Asn163, Asn229, Asn258, and Asn325. 3 cysteine pairs are disulfide-bonded: Cys340–Cys406, Cys369–Cys438, and Cys373–Cys440.

This sequence belongs to the TGF-beta family. As to quaternary structure, homodimer or heterodimer (Potential). But, in contrast to other members of this family, cannot be disulfide-linked. In terms of processing, phosphorylated; phosphorylation is critical for GDF9 function. As to expression, ovary. Strongly expressed in germinal vesicle (GV) stage oocytes, MII-stage oocytes and in zygotes.

The protein localises to the secreted. In terms of biological role, required for ovarian folliculogenesis. In Mus musculus (Mouse), this protein is Growth/differentiation factor 9 (Gdf9).